We begin with the raw amino-acid sequence, 193 residues long: Potassium-transporting ATPase KdpC subunit (193 aa).

A helical membrane pass occupies residues 7–27; that stretch reads PLIVVFVVLVAVTGLAYPAVM.

This sequence belongs to the KdpC family. In terms of assembly, the system is composed of three essential subunits: KdpA, KdpB and KdpC.

Its subcellular location is the cell inner membrane. Part of the high-affinity ATP-driven potassium transport (or Kdp) system, which catalyzes the hydrolysis of ATP coupled with the electrogenic transport of potassium into the cytoplasm. This subunit acts as a catalytic chaperone that increases the ATP-binding affinity of the ATP-hydrolyzing subunit KdpB by the formation of a transient KdpB/KdpC/ATP ternary complex. The sequence is that of Potassium-transporting ATPase KdpC subunit from Burkholderia mallei (strain NCTC 10247).